The primary structure comprises 202 residues: Sperm-specific H1/protamine-like protein type 1 (202 aa).

The segment covering 1-35 (MPSPSRKSRSRSRSRSKSPKRSPAKKARKTPKKPR) has biased composition (basic residues). 2 disordered regions span residues 1–46 (MPSP…PTTL) and 104–202 (KTSA…QFAL). In terms of domain architecture, H15 spans 41 to 120 (KKPTTLSMIV…GATGSFRVGK (80 aa)). The span at 126 to 156 (KKAKKAKSPKKKSSKKSKNKSNNAKAKKSPK) shows a compositional bias: basic residues. Low complexity predominate over residues 177-187 (GARYPFRYQAY).

OE1 and OE3 are produced by post-translational cleavage of a common precursor. As to expression, sperm.

It localises to the nucleus. It is found in the chromosome. Linker histones are implicated in chromatin remodeling and/or transcriptional regulation during spermiogenesis, the process of spermatid maturation into spermatozoa. Protamines substitute for histones in the chromatin of sperm during the haploid phase of spermatogenesis. They compact sperm DNA into a highly condensed, stable and inactive complex. This Ostrea edulis (Native oyster) protein is Sperm-specific H1/protamine-like protein type 1.